The following is a 333-amino-acid chain: UbiA prenyltransferase domain-containing protein 1 (333 aa).

Positions asparagine 13 to proline 33 are disordered. 8 helical membrane passes run leucine 78–threonine 98, phenylalanine 129–threonine 149, leucine 155–phenylalanine 175, tyrosine 177–alanine 197, alanine 199–serine 219, isoleucine 240–leucine 260, leucine 265–isoleucine 285, and leucine 310–leucine 330.

The protein belongs to the UbiA prenyltransferase family.

The protein resides in the endoplasmic reticulum membrane. It is found in the golgi apparatus membrane. The protein localises to the mitochondrion membrane. The enzyme catalyses menadiol + (2E,6E,10E)-geranylgeranyl diphosphate = menaquinol-4 + diphosphate. It catalyses the reaction all-trans-decaprenyl diphosphate + 4-hydroxybenzoate = 4-hydroxy-3-(all-trans-decaprenyl)benzoate + diphosphate. It participates in quinol/quinone metabolism; menaquinone biosynthesis. It functions in the pathway cofactor biosynthesis; ubiquinone biosynthesis. In terms of biological role, prenyltransferase that mediates the formation of menaquinone-4 (MK-4) and coenzyme Q10. MK-4 is a vitamin K2 isoform required for endothelial cell development. Mediates the conversion of phylloquinone (PK) into MK-4, probably by cleaving the side chain of phylloquinone (PK) to release 2-methyl-1,4-naphthoquinone (menadione; K3) and then prenylating it with geranylgeranyl pyrophosphate (GGPP) to form MK-4. Also plays a role in cardiovascular development independently of MK-4 biosynthesis, by acting as a coenzyme Q10 biosynthetic enzyme: coenzyme Q10, also named ubiquinone, plays an important antioxidant role in the cardiovascular system. Mediates biosynthesis of coenzyme Q10 in the Golgi membrane, leading to protect cardiovascular tissues from NOS3/eNOS-dependent oxidative stress. This chain is UbiA prenyltransferase domain-containing protein 1 (UBIAD1), found in Gallus gallus (Chicken).